The primary structure comprises 320 residues: Flavonol 4'-sulfotransferase (320 aa).

69–74 provides a ligand contact to 3'-phosphoadenylyl sulfate; the sequence is KSGTTW. The Proton acceptor role is filled by H129. 3'-phosphoadenylyl sulfate-binding positions include R151, S159, Y217, and 285-287; that span reads RKA.

This sequence belongs to the sulfotransferase 1 family. Highest in shoot tips and lowest in mature leaves and roots.

It localises to the cytoplasm. It catalyses the reaction quercetin 3-sulfate + 3'-phosphoadenylyl sulfate = quercetin 3,4'-bissulfate + adenosine 3',5'-bisphosphate + H(+). No requirement for divalent cations and insensitive to p-chloromercuribenzoate, iodoacetate, or iodoacetamide. Its function is as follows. Sulfotransferase that utilizes 3'-phospho-5'-adenylyl sulfate (PAPS) as sulfonate donor to catalyze the sulfate conjugation of quercetin 3-sulfate &gt; kaempferol 3-sulfate &gt; isorhamnetin 3-sulfate &gt; patuletin 3-sulfate, but not tamarixetin 3-sulfate. O-sulfation of position 4' of flavonol. May play a role in auxin transport. This chain is Flavonol 4'-sulfotransferase, found in Flaveria chlorifolia (Clasping yellowtops).